The primary structure comprises 382 residues: Lipid-A-disaccharide synthase (382 aa).

It belongs to the LpxB family.

The catalysed reaction is 2-N,3-O-bis[(3R)-3-hydroxytetradecanoyl]-alpha-D-glucosaminyl 1-phosphate + UDP-2-N,3-O-bis[(3R)-3-hydroxytetradecanoyl]-alpha-D-glucosamine = lipid A disaccharide (E. coli) + UDP + H(+). It catalyses the reaction a lipid X + a UDP-2-N,3-O-bis[(3R)-3-hydroxyacyl]-alpha-D-glucosamine = a lipid A disaccharide + UDP + H(+). It participates in glycolipid biosynthesis; lipid IV(A) biosynthesis; lipid IV(A) from (3R)-3-hydroxytetradecanoyl-[acyl-carrier-protein] and UDP-N-acetyl-alpha-D-glucosamine: step 5/6. Functionally, condensation of UDP-2,3-diacylglucosamine and 2,3-diacylglucosamine-1-phosphate to form lipid A disaccharide, a precursor of lipid A, a phosphorylated glycolipid that anchors the lipopolysaccharide to the outer membrane of the cell. This is Lipid-A-disaccharide synthase from Escherichia coli O127:H6 (strain E2348/69 / EPEC).